A 456-amino-acid chain; its full sequence is Cytochrome P450 monooxygenase avaH (456 aa).

The helical transmembrane segment at 243–263 threads the bilayer; that stretch reads LMSYFVSVFLVNVALFNAVSI. Cys403 provides a ligand contact to heme.

This sequence belongs to the cytochrome P450 family. The cofactor is heme.

The protein resides in the membrane. Its pathway is secondary metabolite biosynthesis. Cytochrome P450 monooxygenase; part of the cluster that mediates the biosynthesis of a highly modified cyclo-arginine-tryptophan dipeptide (cRW). The first step of the pathway is perfornmed by the arginine-containing cyclodipeptide synthase (RCPDS) avaA that acts as the scaffold-generating enzyme and is responsible for formation of the cyclo-Arg-Trp (cRW) diketopiperazine. AvaB then acts as a multifunctional flavoenzyme that is responsible for generating the cyclo-Arg-formylkynurenine DKP, which can be deformylated by avaC. AvaB then further catalyzes an additional N-oxidation followed by cyclization and dehydration. The next step is an N-acetylation of the guanidine group catalyzed by the arginine N-acetyltransferase avaD. The roles of the additional enzymes identified within the ava cluster still have to be determined. This chain is Cytochrome P450 monooxygenase avaH, found in Aspergillus versicolor.